Reading from the N-terminus, the 199-residue chain is Protein GrpE (199 aa).

Positions 1 to 27 are disordered; the sequence is MSEQNTNHESPEQNVAHDNIEHSDSIL. Basic and acidic residues predominate over residues 18–27; the sequence is DNIEHSDSIL.

The protein belongs to the GrpE family. In terms of assembly, homodimer.

The protein resides in the cytoplasm. Participates actively in the response to hyperosmotic and heat shock by preventing the aggregation of stress-denatured proteins, in association with DnaK and GrpE. It is the nucleotide exchange factor for DnaK and may function as a thermosensor. Unfolded proteins bind initially to DnaJ; upon interaction with the DnaJ-bound protein, DnaK hydrolyzes its bound ATP, resulting in the formation of a stable complex. GrpE releases ADP from DnaK; ATP binding to DnaK triggers the release of the substrate protein, thus completing the reaction cycle. Several rounds of ATP-dependent interactions between DnaJ, DnaK and GrpE are required for fully efficient folding. The chain is Protein GrpE from Psychrobacter sp. (strain St1).